The chain runs to 33 residues: Beta/kappa-theraphotoxin-Hlv1a (33 aa).

3 disulfide bridges follow: Cys2–Cys17, Cys9–Cys22, and Cys16–Cys29. At Ile33 the chain carries Isoleucine amide.

The protein belongs to the neurotoxin 10 (Hwtx-1) family. 11 (haplotoxin-2) subfamily. Expressed by the venom gland.

Its subcellular location is the secreted. Its function is as follows. Spider venom neurotoxin that blocks voltage-gated sodium channel Nav1.3/SCN3A in human (IC(50)=80 nM) and rat (IC(50)=160 nM). Partially inhibits human Kv11.1/KCNH2/ERG (25% at 175 uM). The chain is Beta/kappa-theraphotoxin-Hlv1a from Cyriopagopus lividus (Cobalt blue tarantula).